Here is a 366-residue protein sequence, read N- to C-terminus: D-alanine--D-alanine ligase (366 aa).

In terms of domain architecture, ATP-grasp spans 140 to 346 (KALFAQSDLP…YGELLSRLVD (207 aa)). An ATP-binding site is contributed by 173–228 (EDRLGYPCFVKPANMGSSVGISKATNRAELVAAFDDAVRYDRKLIVEKGINVREIE). 3 residues coordinate Mg(2+): Asp-299, Glu-313, and Asn-315.

Belongs to the D-alanine--D-alanine ligase family. It depends on Mg(2+) as a cofactor. Mn(2+) serves as cofactor.

The protein resides in the cytoplasm. It carries out the reaction 2 D-alanine + ATP = D-alanyl-D-alanine + ADP + phosphate + H(+). Its pathway is cell wall biogenesis; peptidoglycan biosynthesis. Cell wall formation. In Heliobacterium modesticaldum (strain ATCC 51547 / Ice1), this protein is D-alanine--D-alanine ligase.